An 83-amino-acid polypeptide reads, in one-letter code: Small ribosomal subunit protein bS16 (83 aa).

It belongs to the bacterial ribosomal protein bS16 family.

In Polaromonas sp. (strain JS666 / ATCC BAA-500), this protein is Small ribosomal subunit protein bS16.